We begin with the raw amino-acid sequence, 369 residues long: UPF0284 protein sll1500 (369 aa).

The protein belongs to the UPF0284 family.

The polypeptide is UPF0284 protein sll1500 (Synechocystis sp. (strain ATCC 27184 / PCC 6803 / Kazusa)).